The following is a 610-amino-acid chain: tRNA uridine 5-carboxymethylaminomethyl modification enzyme MnmG (610 aa).

Gly-14–Gly-19 serves as a coordination point for FAD. Gly-274–Phe-288 is an NAD(+) binding site.

It belongs to the MnmG family. In terms of assembly, homodimer. Heterotetramer of two MnmE and two MnmG subunits. FAD is required as a cofactor.

It is found in the cytoplasm. NAD-binding protein involved in the addition of a carboxymethylaminomethyl (cmnm) group at the wobble position (U34) of certain tRNAs, forming tRNA-cmnm(5)s(2)U34. The polypeptide is tRNA uridine 5-carboxymethylaminomethyl modification enzyme MnmG (Chlamydia trachomatis serovar L2b (strain UCH-1/proctitis)).